A 714-amino-acid chain; its full sequence is Fatty acid oxidation complex subunit alpha (714 aa).

The tract at residues 1 to 190 is enoyl-CoA hydratase; the sequence is MEMASAFTLN…KLGLVDDVVP (190 aa). Positions 306 to 714 are 3-hydroxyacyl-CoA dehydrogenase; that stretch reads APLNSVGILG…FWKTTATDLQ (409 aa).

In the N-terminal section; belongs to the enoyl-CoA hydratase/isomerase family. The protein in the central section; belongs to the 3-hydroxyacyl-CoA dehydrogenase family. Heterotetramer of two alpha chains (FadJ) and two beta chains (FadI).

It localises to the cytoplasm. The catalysed reaction is a (3S)-3-hydroxyacyl-CoA = a (2E)-enoyl-CoA + H2O. It catalyses the reaction a 4-saturated-(3S)-3-hydroxyacyl-CoA = a (3E)-enoyl-CoA + H2O. It carries out the reaction a (3S)-3-hydroxyacyl-CoA + NAD(+) = a 3-oxoacyl-CoA + NADH + H(+). The enzyme catalyses (3S)-3-hydroxybutanoyl-CoA = (3R)-3-hydroxybutanoyl-CoA. It participates in lipid metabolism; fatty acid beta-oxidation. Catalyzes the formation of a hydroxyacyl-CoA by addition of water on enoyl-CoA. Also exhibits 3-hydroxyacyl-CoA epimerase and 3-hydroxyacyl-CoA dehydrogenase activities. The sequence is that of Fatty acid oxidation complex subunit alpha from Escherichia coli O9:H4 (strain HS).